Reading from the N-terminus, the 86-residue chain is Apolipoprotein C-I (86 aa).

The first 26 residues, 1-26 (MRLFLSLPVLVVVLLMILEGPGPAQG), serve as a signal peptide directing secretion.

Belongs to the apolipoprotein C1 family.

It is found in the secreted. Inhibitor of lipoprotein binding to the low density lipoprotein (LDL) receptor, LDL receptor-related protein, and very low density lipoprotein (VLDL) receptor. Associates with high density lipoproteins (HDL) and the triacylglycerol-rich lipoproteins in the plasma and makes up about 10% of the protein of the VLDL and 2% of that of HDL. Appears to interfere directly with fatty acid uptake and is also the major plasma inhibitor of cholesteryl ester transfer protein (CETP). Binds free fatty acids and reduces their intracellular esterification. Modulates the interaction of APOE with beta-migrating VLDL and inhibits binding of beta-VLDL to the LDL receptor-related protein. The chain is Apolipoprotein C-I (APOC1) from Ateles geoffroyi (Black-handed spider monkey).